A 207-amino-acid chain; its full sequence is 2,3-bisphosphoglycerate-dependent phosphoglycerate mutase (207 aa).

Substrate is bound by residues 10–17 (RHGQSEWN), 23–24 (TG), Arg-62, 89–92 (ERDY), Lys-100, 116–117 (RR), and 160–161 (GN). His-11 acts as the Tele-phosphohistidine intermediate in catalysis. Glu-89 serves as the catalytic Proton donor/acceptor.

The protein belongs to the phosphoglycerate mutase family. BPG-dependent PGAM subfamily. As to quaternary structure, homodimer.

The catalysed reaction is (2R)-2-phosphoglycerate = (2R)-3-phosphoglycerate. The protein operates within carbohydrate degradation; glycolysis; pyruvate from D-glyceraldehyde 3-phosphate: step 3/5. Its function is as follows. Catalyzes the interconversion of 2-phosphoglycerate and 3-phosphoglycerate. This is 2,3-bisphosphoglycerate-dependent phosphoglycerate mutase from Nitrobacter winogradskyi (strain ATCC 25391 / DSM 10237 / CIP 104748 / NCIMB 11846 / Nb-255).